Consider the following 136-residue polypeptide: ATP synthase epsilon chain 2 (136 aa).

It belongs to the ATPase epsilon chain family. In terms of assembly, F-type ATPases have 2 components, CF(1) - the catalytic core - and CF(0) - the membrane proton channel. CF(1) has five subunits: alpha(3), beta(3), gamma(1), delta(1), epsilon(1). CF(0) has three main subunits: a, b and c.

Its subcellular location is the cell inner membrane. Its function is as follows. Produces ATP from ADP in the presence of a proton gradient across the membrane. The chain is ATP synthase epsilon chain 2 from Nitrobacter hamburgensis (strain DSM 10229 / NCIMB 13809 / X14).